The primary structure comprises 138 residues: Brain natriuretic peptide (138 aa).

An N-terminal signal peptide occupies residues 1-22 (MRLSSMWLCSLLLILKLQLSST). Disordered regions lie at residues 50 to 84 (EQMA…AGLD) and 99 to 138 (SVRN…PKQR). C111 and C127 are joined by a disulfide.

This sequence belongs to the natriuretic peptide family.

Its subcellular location is the secreted. Its function is as follows. Cardiac hormone which may function as a paracrine antifibrotic factor in the heart. Also plays a key role in cardiovascular homeostasis through natriuresis, diuresis, vasorelaxation, and inhibition of renin and aldosterone secretion. This is Brain natriuretic peptide (nppb) from Oreochromis mossambicus (Mozambique tilapia).